Reading from the N-terminus, the 428-residue chain is Chaperone SurA (428 aa).

A signal peptide spans 1 to 20 (MKNWKTLLLGIAMIANTSFA). PpiC domains lie at 171–272 (STEL…KVND) and 282–382 (VTEV…ELLD).

The protein localises to the periplasm. It catalyses the reaction [protein]-peptidylproline (omega=180) = [protein]-peptidylproline (omega=0). In terms of biological role, chaperone involved in the correct folding and assembly of outer membrane proteins. Recognizes specific patterns of aromatic residues and the orientation of their side chains, which are found more frequently in integral outer membrane proteins. May act in both early periplasmic and late outer membrane-associated steps of protein maturation. This chain is Chaperone SurA, found in Salmonella choleraesuis (strain SC-B67).